The following is a 656-amino-acid chain: ATP-dependent zinc metalloprotease FtsH (656 aa).

At 1-10 the chain is on the cytoplasmic side; sequence MGDNRWLKNS. The chain crosses the membrane as a helical span at residues 11 to 31; sequence FVYLIILVAALALFFQYLGPG. Over 32–116 the chain is Extracellular; the sequence is ASQTEEKGIA…IVQPAPAWGG (85 aa). A helical membrane pass occupies residues 117-137; sequence LLSIFTILLPTLLLIGFFVFF. The Cytoplasmic portion of the chain corresponds to 138-656; the sequence is MRQAQGSNNQ…GLGGPSPLPA (519 aa). 209 to 216 serves as a coordination point for ATP; the sequence is GPPGTGKT. His-432 serves as a coordination point for Zn(2+). Glu-433 is a catalytic residue. Zn(2+)-binding residues include His-436 and Asp-511. Positions 622 to 632 are enriched in polar residues; sequence FSKSGSTTPNG. The tract at residues 622-656 is disordered; sequence FSKSGSTTPNGRTEDRPAQPDAPQMGLGGPSPLPA.

This sequence in the central section; belongs to the AAA ATPase family. The protein in the C-terminal section; belongs to the peptidase M41 family. Homohexamer. Zn(2+) is required as a cofactor.

Its subcellular location is the cell membrane. Acts as a processive, ATP-dependent zinc metallopeptidase for both cytoplasmic and membrane proteins. Plays a role in the quality control of integral membrane proteins. This is ATP-dependent zinc metalloprotease FtsH from Chloroflexus aggregans (strain MD-66 / DSM 9485).